The chain runs to 316 residues: Daunorubicin resistance ATP-binding protein DrrA3 (316 aa).

The ABC transporter domain maps to 6 to 236 (ITVDGAEKRY…TGGDRIDVVL (231 aa)). 38–45 (GPNGAGKT) is an ATP binding site.

Belongs to the ABC transporter superfamily. Drug exporter-1 (DrugE1) (TC 3.A.1.105) family. As to quaternary structure, the complex is probably composed of two ATP-binding proteins (DrrA3) and two transmembrane proteins (DrrB3).

The protein resides in the cell membrane. It carries out the reaction daunorubicin(in) + ATP + H2O = daunorubicin(out) + ADP + phosphate + H(+). Its function is as follows. Part of the ABC transporter complex DrrA3B3 involved in daunorubicin efflux. Responsible for energy coupling to the transport system. Confers self-resistance to daunorubicin, an antibiotic produced by S.coeruleorubidus. The efficiency of DrrA3B3 to export daunorubicin is probably lower than that of DrrA1B1 or DrrA2B2. The polypeptide is Daunorubicin resistance ATP-binding protein DrrA3 (Streptomyces coeruleorubidus).